The primary structure comprises 189 residues: Peptidyl-tRNA hydrolase (189 aa).

Position 16 (Y16) interacts with tRNA. H21 acts as the Proton acceptor in catalysis. TRNA contacts are provided by F67, N69, and N115.

It belongs to the PTH family. Monomer.

The protein resides in the cytoplasm. The catalysed reaction is an N-acyl-L-alpha-aminoacyl-tRNA + H2O = an N-acyl-L-amino acid + a tRNA + H(+). Its function is as follows. Hydrolyzes ribosome-free peptidyl-tRNAs (with 1 or more amino acids incorporated), which drop off the ribosome during protein synthesis, or as a result of ribosome stalling. Catalyzes the release of premature peptidyl moieties from peptidyl-tRNA molecules trapped in stalled 50S ribosomal subunits, and thus maintains levels of free tRNAs and 50S ribosomes. The polypeptide is Peptidyl-tRNA hydrolase (Legionella pneumophila (strain Paris)).